Reading from the N-terminus, the 532-residue chain is Sodium-dependent lysophosphatidylcholine symporter 1-A (532 aa).

Topologically, residues 1–40 are cytoplasmic; sequence MARGEGAEQFSSGLLPTAKSVTQNEIKMVKLPKQQERKRA. Residues 41-70 form a helical membrane-spanning segment; the sequence is LTVWSKVCFAIGGAPYQITGTALGFFLQIF. The Extracellular segment spans residues 71-81; the sequence is LLDVAQLNPLN. A helical transmembrane segment spans residues 82–102; the sequence is ASVILFVGRAWDAVTDPTVGF. The Cytoplasmic portion of the chain corresponds to 103-114; it reads LVSRTPWTRHGR. Residues 115–134 traverse the membrane as a helical segment; it reads MMPWILVSTIPAVLCYFLIW. The Extracellular segment spans residues 135–144; that stretch reads VVPPIEQGKM. The helical transmembrane segment at 145-169 threads the bilayer; the sequence is MWYLLFYCLFQTLQTCFHVPYSALT. The Cytoplasmic portion of the chain corresponds to 170–176; it reads MFISTEQ. Residues 177-208 traverse the membrane as a helical segment; the sequence is RERDSATAYRMTVEVFGTVVGTAIQGQIVGMA. At 209 to 232 the chain is on the extracellular side; sequence NTPCKNNTSPNNSSNDLIQSNNSH. Cysteines 212 and 464 form a disulfide. N-linked (GlcNAc...) asparagine glycosylation is found at Asn-214, Asn-220, and Asn-229. The chain crosses the membrane as a helical span at residues 233 to 266; sequence IPLKSNIFDERCAYMIASAVISLIYVVCAAVLFF. Over 267–297 the chain is Cytoplasmic; it reads GVREQDVQGELKAQKRVSFQKGLRLVMGHGP. A helical membrane pass occupies residues 298-324; it reads YVKLVLAFLFTSLAFMLLEGNFAVFIK. Topologically, residues 325-335 are extracellular; the sequence is YTLGFREDFQN. A helical transmembrane segment spans residues 336-354; sequence ILLVIMVSATVSIPMWQWF. Topologically, residues 355-358 are cytoplasmic; that stretch reads LCRF. A helical transmembrane segment spans residues 359 to 380; that stretch reads GKKTAVYIGITWAVPFMILVVS. Residues 381–383 lie on the Extracellular side of the membrane; the sequence is VNS. A helical transmembrane segment spans residues 384 to 420; the sequence is SLIVSYIVSIAAGVSVGAAFLLPWSMLPDVVDDFKLQ. At 421–430 the chain is on the cytoplasmic side; the sequence is NPTSQGHEAI. A helical transmembrane segment spans residues 431 to 457; sequence FYSFYVFFTKFASGVSLGVSTLALSFA. At 458–469 the chain is on the extracellular side; it reads GYETGVCVQSDS. A helical transmembrane segment spans residues 470 to 493; it reads VNLTLKLLVSAAPVSLIALGLLIF. The Cytoplasmic segment spans residues 494–532; that stretch reads MTYPIDEERREYNNKQLQLLLRNEEEEDEMEVLKPDITA.

This sequence belongs to the major facilitator superfamily. As to expression, expressed in the developing nervous system.

The protein resides in the cell membrane. The protein localises to the endoplasmic reticulum membrane. It catalyses the reaction a 1-acyl-sn-glycero-3-phosphocholine(in) + Na(+)(in) = a 1-acyl-sn-glycero-3-phosphocholine(out) + Na(+)(out). It carries out the reaction 1-(4Z,7Z,10Z,13Z,16Z,19Z-docosahexaenoyl)-sn-glycero-3-phosphocholine(in) + Na(+)(in) = 1-(4Z,7Z,10Z,13Z,16Z,19Z-docosahexaenoyl)-sn-glycero-3-phosphocholine(out) + Na(+)(out). The enzyme catalyses 1-(9Z-octadecenoyl)-sn-glycero-3-phosphocholine(in) + Na(+)(in) = 1-(9Z-octadecenoyl)-sn-glycero-3-phosphocholine(out) + Na(+)(out). The catalysed reaction is 1-hexadecanoyl-sn-glycero-3-phosphocholine(in) + Na(+)(in) = 1-hexadecanoyl-sn-glycero-3-phosphocholine(out) + Na(+)(out). It catalyses the reaction a 1-acyl-sn-glycero-3-phosphoethanolamine(in) + Na(+)(in) = a 1-acyl-sn-glycero-3-phosphoethanolamine(out) + Na(+)(out). Functionally, sodium-dependent lysophosphatidylcholine (LPC) symporter, which plays an essential role for blood-brain barrier formation and function. Specifically expressed in endothelium of the blood-brain barrier of micro-vessels and transports LPC into the brain. Transport of LPC is essential because it constitutes the major mechanism by which docosahexaenoic acid (DHA), an omega-3 fatty acid that is essential for normal brain growth and cognitive function, enters the brain. Transports LPC carrying long-chain fatty acids such LPC oleate and LPC palmitate with a minimum acyl chain length of 14 carbons. Does not transport docosahexaenoic acid in unesterified fatty acid. The chain is Sodium-dependent lysophosphatidylcholine symporter 1-A (mfsd2aa) from Danio rerio (Zebrafish).